We begin with the raw amino-acid sequence, 293 residues long: ATP phosphoribosyltransferase (293 aa).

It belongs to the ATP phosphoribosyltransferase family. Long subfamily. Mg(2+) serves as cofactor.

It is found in the cytoplasm. It catalyses the reaction 1-(5-phospho-beta-D-ribosyl)-ATP + diphosphate = 5-phospho-alpha-D-ribose 1-diphosphate + ATP. The protein operates within amino-acid biosynthesis; L-histidine biosynthesis; L-histidine from 5-phospho-alpha-D-ribose 1-diphosphate: step 1/9. With respect to regulation, feedback inhibited by histidine. Catalyzes the condensation of ATP and 5-phosphoribose 1-diphosphate to form N'-(5'-phosphoribosyl)-ATP (PR-ATP). Has a crucial role in the pathway because the rate of histidine biosynthesis seems to be controlled primarily by regulation of HisG enzymatic activity. The chain is ATP phosphoribosyltransferase from Nitratidesulfovibrio vulgaris (strain DP4) (Desulfovibrio vulgaris).